The chain runs to 41 residues: Large ribosomal subunit protein bL36A (41 aa).

This sequence belongs to the bacterial ribosomal protein bL36 family.

In Vibrio cholerae serotype O1 (strain ATCC 39541 / Classical Ogawa 395 / O395), this protein is Large ribosomal subunit protein bL36A.